The following is a 501-amino-acid chain: MILIMQKKNLWLHLLGLVILTLLSAYAVVKYPINLGLDLKGGVEFLLEPDFSVAIEREYEDLARNLREKLSKFNVLEVYATKEGVIIELLDKKEVENIKKVIQDINPNVIFEEEGDKLVVKFTQKYVEQLKEDIVRQSIEIIRDRIDKLGVTQPVVTRVGKYRILVDLPGFLDVERAKKIIGSTASLELKLVIDVSTDRKELEKKLTPDREILPSRDGREWFLVEKAPVITGQDLKTAYVGVDNLGQPAVNFELKGEAAEKFGKFTEQNIGKRLAIVLDRKVVSAPVIRSKISDRGQITGNFTAQEARDLALILRTGSLPSPLKFLQEKIVGPSLGKDAIEQGIKAGILAIILLAVVLIARYKTAGITANISIFLNVLFLLASMAFLGATLTLPGIAGIILNMGIAVDSNVLIFERVKEELRLGNTVSKAIELGFKRTLSAVWDTHVTLLVASVILFQFGSGPVKGFATTLALGTIASFISNVYYAKVFLDLLNSLKILKI.

6 helical membrane passes run 9–29 (NLWL…YAVV), 339–359 (AIEQ…VVLI), 371–391 (ISIF…GATL), 394–414 (PGIA…VLIF), 447–467 (VTLL…VKGF), and 470–490 (TLAL…KVFL).

This sequence belongs to the SecD/SecF family. SecD subfamily. Forms a complex with SecF. Part of the essential Sec protein translocation apparatus which comprises SecA, SecYEG and auxiliary proteins SecDF. Other proteins may also be involved.

It localises to the cell inner membrane. Its function is as follows. Part of the Sec protein translocase complex. Interacts with the SecYEG preprotein conducting channel. SecDF uses the proton motive force (PMF) to complete protein translocation after the ATP-dependent function of SecA. The sequence is that of Protein translocase subunit SecD from Aquifex aeolicus (strain VF5).